The primary structure comprises 135 residues: MRLQFFLVMAVATLATISATRVPDDANLQSVNAPVQTVTRSRRFLRTADTDIVYEPKVHNPGKKQVFIEDKLQKALTDPKKNKKLYARWYNSGFTVKQVEGGLDQNENRELELTYKNLALGYAKYYQARRSQEAK.

Residues 1 to 19 (MRLQFFLVMAVATLATISA) form the signal peptide. Positions 43–71 (RFLRTADTDIVYEPKVHNPGKKQVFIEDK) match the RxLR-dEER motif. 3 residues coordinate a 1,2-diacyl-sn-glycero-3-phospho-(1D-myo-inositol-3-phosphate): Lys-81, Lys-83, and Lys-84.

The protein belongs to the RxLR effector family.

The protein resides in the secreted. The protein localises to the host cell. Effector that suppresses plant defense responses during the early stages of pathogen infection. Suppresses cell death induced by effectors and PAMPs in plant hosts. The sequence is that of RxLR effector protein Avh5 from Phytophthora sojae (Soybean stem and root rot agent).